A 93-amino-acid chain; its full sequence is MVKIRLTRVGAKNKPAYRIVAMDSREPRDGKHLEILGFYDPKTDPATIQLKEERILYWLSQGAQPTDTVLSILKKYGVWDKFLAMKTSAKSSA.

Belongs to the bacterial ribosomal protein bS16 family.

This Dictyoglomus thermophilum (strain ATCC 35947 / DSM 3960 / H-6-12) protein is Small ribosomal subunit protein bS16.